The following is a 636-amino-acid chain: MNDWTIEDARAGYNVTHWSQGFYGIGEAGEVTVSPDPLNPSNKVALDTLAQDLVQAGIALPVLVRFPQILHHRVESLCDAFNQAIQKYEYQNDYLLVYPIKVNQQKTVVEEILASQVSKEVPQLGLEAGSKPELMAVLAMAQKASSVIVCNGYKDKEYVRLALIGEKLGHKVYIVLEKMSELKMVLEEARELGVTPRLGLRTRLAFQGKGKWQASGGEKSKFGLSAAQVLKVVDELKEANMLESLQLLHFHLGSQIANIRDIRQGVSEAGRFYCELRQLGASINCFDVGGGLAVDYDGTRSQSNNSMNYGLTEYANNIVNVLTDLCNEYEQPMPRIISESGRHLTAHHAVLITDVIGTEAYMPENIQAPAEDAPQLLHNMWQSWTEISGRHDQRAIIEIYHDSQSDIAEAHSLFAVGQLSLMDRAWAEQTNLRVCHEVKGLLSNNNRYHRPVIDELNEKLADKLFVNFSLFQSLPDAWGIDQVFPVLPLTCLDKAPERRAVMLDITCDSDGIVDQYVDGQGIETTLPVPAWDPANPYLIGFFMVGAYQEILGDMHNLFGDTNSAVVFVEDNGKARIESTLDGDTVADVLRYVNLDADEFMHTYEELVEQHIVEDERASILEELQLGLKGYTYLEDF.

Lys-101 bears the N6-(pyridoxal phosphate)lysine mark. 286 to 296 contributes to the substrate binding site; the sequence is FDVGGGLAVDY.

It belongs to the Orn/Lys/Arg decarboxylase class-II family. SpeA subfamily. It depends on Mg(2+) as a cofactor. Requires pyridoxal 5'-phosphate as cofactor.

It catalyses the reaction L-arginine + H(+) = agmatine + CO2. It participates in amine and polyamine biosynthesis; agmatine biosynthesis; agmatine from L-arginine: step 1/1. In terms of biological role, catalyzes the biosynthesis of agmatine from arginine. This chain is Biosynthetic arginine decarboxylase, found in Shewanella denitrificans (strain OS217 / ATCC BAA-1090 / DSM 15013).